Reading from the N-terminus, the 563-residue chain is Arginine--tRNA ligase (563 aa).

The 'HIGH' region signature appears at 137 to 147; it reads ANPTGLLHMGN.

Belongs to the class-I aminoacyl-tRNA synthetase family. As to quaternary structure, monomer.

It localises to the cytoplasm. It carries out the reaction tRNA(Arg) + L-arginine + ATP = L-arginyl-tRNA(Arg) + AMP + diphosphate. In Desulforudis audaxviator (strain MP104C), this protein is Arginine--tRNA ligase.